The sequence spans 471 residues: Glutamate--tRNA ligase 1 (471 aa).

The 'HIGH' region signature appears at 10 to 20 (PSPTGFLHIGG). Residues 113-140 (ARKEGRPPRYDGRWRDRDPSEAPKDRDP) are disordered. The short motif at 239-243 (KLSKR) is the 'KMSKS' region element. Position 242 (Lys-242) interacts with ATP.

It belongs to the class-I aminoacyl-tRNA synthetase family. Glutamate--tRNA ligase type 1 subfamily. As to quaternary structure, monomer.

It localises to the cytoplasm. The enzyme catalyses tRNA(Glu) + L-glutamate + ATP = L-glutamyl-tRNA(Glu) + AMP + diphosphate. Functionally, catalyzes the attachment of glutamate to tRNA(Glu) in a two-step reaction: glutamate is first activated by ATP to form Glu-AMP and then transferred to the acceptor end of tRNA(Glu). This Xanthobacter autotrophicus (strain ATCC BAA-1158 / Py2) protein is Glutamate--tRNA ligase 1.